A 273-amino-acid polypeptide reads, in one-letter code: Tryptase-2 (273 aa).

An N-terminal signal peptide occupies residues 1 to 18; that stretch reads MLHLLALALLLSLVSAAP. Residues 19–28 constitute a propeptide, activation peptide; sequence APGQALQRSG. The Peptidase S1 domain occupies 29-270; that stretch reads IIGGKEAPGS…YLDWIHQYVP (242 aa). Cysteines 57 and 73 form a disulfide. Catalysis depends on charge relay system residues histidine 72 and aspartate 119. Intrachain disulfides connect cysteine 153–cysteine 228, cysteine 186–cysteine 209, and cysteine 218–cysteine 246. Serine 222 acts as the Charge relay system in catalysis. N-linked (GlcNAc...) asparagine glycosylation is present at asparagine 231.

It belongs to the peptidase S1 family. Tryptase subfamily. As to quaternary structure, homotetramer.

Its subcellular location is the secreted. It catalyses the reaction Preferential cleavage: Arg-|-Xaa, Lys-|-Xaa, but with more restricted specificity than trypsin.. Functionally, tryptase is the major neutral protease present in mast cells and is secreted upon the coupled activation-degranulation response of this cell type. In Ovis aries (Sheep), this protein is Tryptase-2.